Reading from the N-terminus, the 483-residue chain is Peroxisomal biogenesis factor 3 (483 aa).

Residues 1–14 are Peroxisomal-facing; the sequence is MTGNRSLVQRHRKK. A helical membrane pass occupies residues 15–35; it reads FVVSSVLFATLFATCAITVYF. Over 36-483 the chain is Cytoplasmic; it reads SKRWLYKQHL…SACVYSNFGL (448 aa). Disordered stretches follow at residues 119 to 149 and 230 to 253; these read GLSS…VSET and NNLP…TRSI. Polar residues predominate over residues 242-253; that stretch reads SDGTIDTDTRSI.

Belongs to the peroxin-3 family.

The protein resides in the peroxisome membrane. In terms of biological role, involved in peroxisome biosynthesis. The polypeptide is Peroxisomal biogenesis factor 3 (PEX3) (Kluyveromyces lactis (strain ATCC 8585 / CBS 2359 / DSM 70799 / NBRC 1267 / NRRL Y-1140 / WM37) (Yeast)).